A 152-amino-acid polypeptide reads, in one-letter code: Transcriptional regulator MraZ (152 aa).

2 consecutive SpoVT-AbrB domains span residues 5 to 52 (ASAI…PLEA) and 81 to 124 (AHEC…DEAA).

It belongs to the MraZ family. As to quaternary structure, forms oligomers.

The protein localises to the cytoplasm. It is found in the nucleoid. This is Transcriptional regulator MraZ from Shewanella loihica (strain ATCC BAA-1088 / PV-4).